Here is a 157-residue protein sequence, read N- to C-terminus: 6,7-dimethyl-8-ribityllumazine synthase (157 aa).

Residues phenylalanine 22, 57–59, and 81–83 contribute to the 5-amino-6-(D-ribitylamino)uracil site; these read AYE and TVI. A (2S)-2-hydroxy-3-oxobutyl phosphate-binding site is contributed by 86 to 87; it reads GT. The active-site Proton donor is histidine 89. A 5-amino-6-(D-ribitylamino)uracil-binding site is contributed by phenylalanine 114. Arginine 128 is a binding site for (2S)-2-hydroxy-3-oxobutyl phosphate.

This sequence belongs to the DMRL synthase family. Forms an icosahedral capsid composed of 60 subunits, arranged as a dodecamer of pentamers.

It carries out the reaction (2S)-2-hydroxy-3-oxobutyl phosphate + 5-amino-6-(D-ribitylamino)uracil = 6,7-dimethyl-8-(1-D-ribityl)lumazine + phosphate + 2 H2O + H(+). It functions in the pathway cofactor biosynthesis; riboflavin biosynthesis; riboflavin from 2-hydroxy-3-oxobutyl phosphate and 5-amino-6-(D-ribitylamino)uracil: step 1/2. Catalyzes the formation of 6,7-dimethyl-8-ribityllumazine by condensation of 5-amino-6-(D-ribitylamino)uracil with 3,4-dihydroxy-2-butanone 4-phosphate. This is the penultimate step in the biosynthesis of riboflavin. The chain is 6,7-dimethyl-8-ribityllumazine synthase from Histophilus somni (strain 129Pt) (Haemophilus somnus).